The following is a 145-amino-acid chain: Probable flagellum biosynthesis repressor protein FlbT (145 aa).

This sequence belongs to the FlbT family.

In terms of biological role, has a post-transcriptional repressor function in flagellum biogenesis. Associates with the 5'-UTR of fljK mRNA and promotes its degradation. The polypeptide is Probable flagellum biosynthesis repressor protein FlbT (Chelativorans sp. (strain BNC1)).